The sequence spans 185 residues: Transposon Tn3 resolvase (185 aa).

The 136-residue stretch at 2 to 137 (RIFGYARVST…EGRQEAKLKG (136 aa)) folds into the Resolvase/invertase-type recombinase catalytic domain. The active-site O-(5'-phospho-DNA)-serine intermediate is the Ser-10. The H-T-H motif DNA-binding region spans 161 to 180 (ATEIAHQLSIARSTVYKILE).

The protein belongs to the site-specific recombinase resolvase family.

Functionally, resolvase catalyzes the resolution (a site-specific recombination) of the cointegrated replicon to yield the final transposition products. In Escherichia coli, this protein is Transposon Tn3 resolvase (tnpR).